The sequence spans 338 residues: Acyl-CoA:acyl-CoA alkyltransferase (338 aa).

Mn(2+) is bound by residues His18 and Asp56. Glu97 acts as the Proton acceptor in catalysis. The active-site Acyl-thioester intermediate is the Cys123.

It belongs to the thiolase-like superfamily. OleA family. In terms of assembly, homodimer. Weakly associates with the OleBCD complex.

It is found in the cytoplasm. It catalyses the reaction a 1,2-saturated acyl-CoA + an acyl-CoA + H2O = an (R)-2-alkyl-3-oxoalkanoate + 2 CoA + H(+). Its activity is regulated as follows. Inhibited by cerulenin. Its function is as follows. Involved in olefin biosynthesis. Catalyzes a non-decarboxylative head-to-head Claisen condensation of two acyl-CoA molecules, generating an (R)-2-alkyl-3-oxoalkanoate. Is active with fatty acyl-CoA substrates that ranged from C(8) to C(16) in length, and is the most active with palmitoyl-CoA and myristoyl-CoA. In Xanthomonas campestris pv. campestris (strain ATCC 33913 / DSM 3586 / NCPPB 528 / LMG 568 / P 25), this protein is Acyl-CoA:acyl-CoA alkyltransferase.